A 207-amino-acid chain; its full sequence is ANERPPGSCSSSGCRRCCRPGPYHSHLAVLKAEQAAVFKFPLAPLGCSGLGSALLAAGPGMPGPAGASHLPLELQLRGKLEAAGSGEPGSKAKKGRRSRTVFTELQLMGLEKRFEKQKYLSTPDRIDLAESLGLSQLQVKTWYQNRRMKWKKIVLQGGGLESPTKPKGRPKKNSIPSSEQLSEQERAKETEKPPESPGEPSERQQEE.

The homeobox DNA-binding region spans 95 to 154; that stretch reads GRRSRTVFTELQLMGLEKRFEKQKYLSTPDRIDLAESLGLSQLQVKTWYQNRRMKWKKIV. Residues 157–207 are disordered; the sequence is GGGLESPTKPKGRPKKNSIPSSEQLSEQERAKETEKPPESPGEPSERQQEE. Over residues 183–207 the composition is skewed to basic and acidic residues; sequence EQERAKETEKPPESPGEPSERQQEE.

This sequence belongs to the BAR homeobox family. As to expression, expressed predominantly in the facial primordia, developing stomach, and proximal limbs.

The protein resides in the nucleus. Its function is as follows. Transcription factor, which is involved in craniofacial development, in odontogenic region definition, and in stomach organogenesis. Binds to a regulatory module of the NCAM promoter. In Gallus gallus (Chicken), this protein is Homeobox protein BarH-like 1 (BARX1).